Reading from the N-terminus, the 131-residue chain is L-ectoine synthase (131 aa).

This sequence belongs to the ectoine synthase family.

The catalysed reaction is (2S)-4-acetamido-2-aminobutanoate = L-ectoine + H2O. It participates in amine and polyamine biosynthesis; ectoine biosynthesis; L-ectoine from L-aspartate 4-semialdehyde: step 3/3. In terms of biological role, catalyzes the circularization of gamma-N-acetyl-alpha,gamma-diaminobutyric acid (ADABA) to ectoine (1,4,5,6-tetrahydro-2-methyl-4-pyrimidine carboxylic acid), which is an excellent osmoprotectant. The protein is L-ectoine synthase of Nocardia farcinica (strain IFM 10152).